Reading from the N-terminus, the 458-residue chain is Elongation factor 1-alpha (458 aa).

G2 carries the post-translational modification N,N,N-trimethylglycine. Residue K3 is modified to N6,N6-dimethyllysine; alternate. K3 is subject to N6-methyllysine; alternate. Residues K5–S240 enclose the tr-type G domain. The G1 stretch occupies residues G14–S21. G14 to S21 contacts GTP. K30 carries the post-translational modification N6-methyllysine. A G2 region spans residues G70–D74. K79 is subject to N6,N6,N6-trimethyllysine. The interval D91–G94 is G3. GTP-binding positions include D91–H95 and N153–D156. Residues N153 to D156 are G4. The interval S192–W194 is G5. An N6,N6-dimethyllysine; alternate modification is found at K316. The residue at position 316 (K316) is an N6-methyllysine; alternate. Position 390 is an N6-methyllysine (K390).

This sequence belongs to the TRAFAC class translation factor GTPase superfamily. Classic translation factor GTPase family. EF-Tu/EF-1A subfamily.

The protein localises to the cytoplasm. Its function is as follows. This protein promotes the GTP-dependent binding of aminoacyl-tRNA to the A-site of ribosomes during protein biosynthesis. This Absidia glauca (Pin mould) protein is Elongation factor 1-alpha (TEF-1).